Consider the following 276-residue polypeptide: WIMGHMVNKIEQINEFLDLGANSIEVDIAFDELGYPEYTYHGVPCDCKRYCTKSEKIDDFIEALSAATTPGNPKFRKELTLVVFDLKTGGFDASRMYKSGKAFAELIQFSYWKGSDDAGRAYIVLSLPKLDHYEFIKAFREHFDTSTFKNLLEERVGYDFSGNEDMGLTRVVLNKAGVNDREHVWQGDGITNCILRSLDRVKAAVAIRDSATGYINKVYFWTIQAYSSVSDALNAEVDGIMTNEPDVIANVLKEDAFKDRFRLATYRDNPWETFKR.

H5 is an active-site residue. E25 and D27 together coordinate Mg(2+). Catalysis depends on H41, which acts as the Nucleophile. Intrachain disulfides connect C45/C51 and C47/C193. D85 is a binding site for Mg(2+).

The protein belongs to the arthropod phospholipase D family. Class II subfamily. Requires Mg(2+) as cofactor. Expressed by the venom gland.

Its subcellular location is the secreted. The catalysed reaction is an N-(acyl)-sphingosylphosphocholine = an N-(acyl)-sphingosyl-1,3-cyclic phosphate + choline. It carries out the reaction an N-(acyl)-sphingosylphosphoethanolamine = an N-(acyl)-sphingosyl-1,3-cyclic phosphate + ethanolamine. It catalyses the reaction a 1-acyl-sn-glycero-3-phosphocholine = a 1-acyl-sn-glycero-2,3-cyclic phosphate + choline. The enzyme catalyses a 1-acyl-sn-glycero-3-phosphoethanolamine = a 1-acyl-sn-glycero-2,3-cyclic phosphate + ethanolamine. Its function is as follows. Dermonecrotic toxins cleave the phosphodiester linkage between the phosphate and headgroup of certain phospholipids (sphingolipid and lysolipid substrates), forming an alcohol (often choline) and a cyclic phosphate. This toxin acts on sphingomyelin (SM). It may also act on ceramide phosphoethanolamine (CPE), lysophosphatidylcholine (LPC) and lysophosphatidylethanolamine (LPE), but not on lysophosphatidylserine (LPS), and lysophosphatidylglycerol (LPG). It acts by transphosphatidylation, releasing exclusively cyclic phosphate products as second products. Induces dermonecrosis, hemolysis, increased vascular permeability, edema, inflammatory response, and platelet aggregation. The chain is Dermonecrotic toxin LlSicTox-alphaIV2ii from Loxosceles laeta (South American recluse spider).